We begin with the raw amino-acid sequence, 94 residues long: MTKSELIERLAGQQSHVPAKVVEDAVKEMLEHMAGTLAEGERIEIRGFGSFSLHYRAPRVGRNPKTGDKVELEGKYVPHFKPGKELRDRANIYG.

The protein belongs to the bacterial histone-like protein family. Heterodimer of an alpha and a beta chain.

Functionally, this protein is one of the two subunits of integration host factor, a specific DNA-binding protein that functions in genetic recombination as well as in transcriptional and translational control. The sequence is that of Integration host factor subunit beta from Yersinia pseudotuberculosis serotype O:1b (strain IP 31758).